The following is a 788-amino-acid chain: Ribosome biogenesis protein ERB1 (788 aa).

Residues 1-91 (MGDLKGSRKR…SKPIREKSKP (91 aa)) form a disordered region. Residues 38–50 (LSDKSHDTEHSSD) show a composition bias toward basic and acidic residues. A compositionally biased stretch (acidic residues) spans 51–78 (SEIELVDDLSSDDGEEYEDEFDSDEIPS). Residues 80 to 91 (IESKPIREKSKP) are compositionally biased toward basic and acidic residues. WD repeat units lie at residues 433 to 472 (GHSG…QIWS), 476 to 516 (SDEE…PEME), 613 to 651 (KGGG…LVKI), 654 to 699 (PGAR…RPYK), 703 to 742 (YHQK…DLLS), and 758 to 788 (TGEL…RLWT).

It belongs to the WD repeat BOP1/ERB1 family. In terms of assembly, component of the NOP7 complex, composed of ERB1, NOP7 and YTM1. The complex is held together by ERB1, which interacts with NOP7 via its N-terminal domain and with YTM1 via a high-affinity interaction between the seven-bladed beta-propeller domains of the 2 proteins. The NOP7 complex associates with the 66S pre-ribosome.

It is found in the nucleus. Its subcellular location is the nucleolus. The protein localises to the nucleoplasm. In terms of biological role, component of the NOP7 complex, which is required for maturation of the 25S and 5.8S ribosomal RNAs and formation of the 60S ribosome. In Ajellomyces capsulatus (strain NAm1 / WU24) (Darling's disease fungus), this protein is Ribosome biogenesis protein ERB1.